The sequence spans 819 residues: Leucine--tRNA ligase (819 aa).

Positions Pro41–His51 match the 'HIGH' region motif. The 'KMSKS' region signature appears at Lys578–Ser582. An ATP-binding site is contributed by Lys581.

This sequence belongs to the class-I aminoacyl-tRNA synthetase family.

The protein resides in the cytoplasm. It catalyses the reaction tRNA(Leu) + L-leucine + ATP = L-leucyl-tRNA(Leu) + AMP + diphosphate. This is Leucine--tRNA ligase from Fervidobacterium nodosum (strain ATCC 35602 / DSM 5306 / Rt17-B1).